Reading from the N-terminus, the 231-residue chain is NADH-ubiquinone oxidoreductase chain 4 (231 aa).

6 helical membrane-spanning segments follow: residues 1–21 (PIAG…YGII), 34–54 (VFLP…LTCL), 61–80 (SLIA…AIMI), 84–106 (WGLS…LFCL), 118–138 (ILIL…WWLL), and 169–189 (TIIL…HMFL).

Belongs to the complex I subunit 4 family.

It localises to the mitochondrion membrane. It carries out the reaction a ubiquinone + NADH + 5 H(+)(in) = a ubiquinol + NAD(+) + 4 H(+)(out). Core subunit of the mitochondrial membrane respiratory chain NADH dehydrogenase (Complex I) that is believed to belong to the minimal assembly required for catalysis. Complex I functions in the transfer of electrons from NADH to the respiratory chain. The immediate electron acceptor for the enzyme is believed to be ubiquinone. The polypeptide is NADH-ubiquinone oxidoreductase chain 4 (MT-ND4) (Porthidium nasutum (Hognosed pitviper)).